The sequence spans 575 residues: Phosphoenolpyruvate-protein phosphotransferase (575 aa).

His-191 functions as the Tele-phosphohistidine intermediate in the catalytic mechanism. Phosphoenolpyruvate-binding residues include Arg-298 and Arg-334. Residues Glu-435 and Asp-459 each coordinate Mg(2+). Phosphoenolpyruvate contacts are provided by residues 458–459 (ND) and Arg-469. Cys-506 serves as the catalytic Proton donor.

The protein belongs to the PEP-utilizing enzyme family. In terms of assembly, homodimer. Mg(2+) serves as cofactor.

The protein resides in the cytoplasm. The catalysed reaction is L-histidyl-[protein] + phosphoenolpyruvate = N(pros)-phospho-L-histidyl-[protein] + pyruvate. Functionally, general (non sugar-specific) component of the phosphoenolpyruvate-dependent sugar phosphotransferase system (sugar PTS). This major carbohydrate active-transport system catalyzes the phosphorylation of incoming sugar substrates concomitantly with their translocation across the cell membrane. Enzyme I transfers the phosphoryl group from phosphoenolpyruvate (PEP) to the phosphoryl carrier protein (HPr). This is Phosphoenolpyruvate-protein phosphotransferase (ptsI) from Lactococcus lactis subsp. lactis (strain IL1403) (Streptococcus lactis).